The primary structure comprises 969 residues: Bifunctional glutamine synthetase adenylyltransferase/adenylyl-removing enzyme (969 aa).

Residues 1–456 (MNWQANIHKL…HFEQLFAAPH (456 aa)) form an adenylyl removase region. Positions 466–969 (EKRLAEVWLG…SALLEDESAK (504 aa)) are adenylyl transferase.

This sequence belongs to the GlnE family. Mg(2+) is required as a cofactor.

It carries out the reaction [glutamine synthetase]-O(4)-(5'-adenylyl)-L-tyrosine + phosphate = [glutamine synthetase]-L-tyrosine + ADP. The enzyme catalyses [glutamine synthetase]-L-tyrosine + ATP = [glutamine synthetase]-O(4)-(5'-adenylyl)-L-tyrosine + diphosphate. Involved in the regulation of glutamine synthetase GlnA, a key enzyme in the process to assimilate ammonia. When cellular nitrogen levels are high, the C-terminal adenylyl transferase (AT) inactivates GlnA by covalent transfer of an adenylyl group from ATP to specific tyrosine residue of GlnA, thus reducing its activity. Conversely, when nitrogen levels are low, the N-terminal adenylyl removase (AR) activates GlnA by removing the adenylyl group by phosphorolysis, increasing its activity. The regulatory region of GlnE binds the signal transduction protein PII (GlnB) which indicates the nitrogen status of the cell. This Nitrosococcus oceani (strain ATCC 19707 / BCRC 17464 / JCM 30415 / NCIMB 11848 / C-107) protein is Bifunctional glutamine synthetase adenylyltransferase/adenylyl-removing enzyme.